The sequence spans 158 residues: Ribonuclease H (158 aa).

The RNase H type-1 domain maps to 3 to 144 (ELKLIHIFTD…CDQLARAAAE (142 aa)). Mg(2+) is bound by residues Asp-12, Glu-50, Asp-72, and Asp-136.

This sequence belongs to the RNase H family. Monomer. Mg(2+) serves as cofactor.

It localises to the cytoplasm. The catalysed reaction is Endonucleolytic cleavage to 5'-phosphomonoester.. Endonuclease that specifically degrades the RNA of RNA-DNA hybrids. This chain is Ribonuclease H, found in Shewanella sp. (strain MR-4).